A 580-amino-acid chain; its full sequence is 3-(3-hydroxy-phenyl)propionate/3-hydroxycinnamic acid hydroxylase (580 aa).

FAD-binding positions include 14 to 43 and 291 to 301; these read DVLV…VVEE and FRRGRLLLAGD.

The protein belongs to the PheA/TfdB FAD monooxygenase family. The cofactor is FAD.

The catalysed reaction is 3-(3-hydroxyphenyl)propanoate + NADH + O2 + H(+) = 3-(2,3-dihydroxyphenyl)propanoate + NAD(+) + H2O. It carries out the reaction (2E)-3-(3-hydroxyphenyl)prop-2-enoate + NADH + O2 + H(+) = (2E)-3-(2,3-dihydroxyphenyl)prop-2-enoate + NAD(+) + H2O. It participates in aromatic compound metabolism; 3-phenylpropanoate degradation. Its function is as follows. Catalyzes the insertion of one atom of molecular oxygen into position 2 of the phenyl ring of 3-(3-hydroxyphenyl)propionate (3-HPP) and hydroxycinnamic acid (3HCI). This Mycobacterium avium (strain 104) protein is 3-(3-hydroxy-phenyl)propionate/3-hydroxycinnamic acid hydroxylase.